We begin with the raw amino-acid sequence, 265 residues long: Homeobox protein Nkx-6.3 (265 aa).

The segment at residues K139–S198 is a DNA-binding region (homeobox). Residues K196–D240 are disordered.

The protein localises to the nucleus. In terms of biological role, putative transcription factor, which may be involved in patterning of central nervous system and pancreas. This Homo sapiens (Human) protein is Homeobox protein Nkx-6.3 (NKX6-3).